The chain runs to 526 residues: Probable fucosyltransferase 7 (526 aa).

Over 1-4 the chain is Cytoplasmic; the sequence is MKTK. Residues 5–25 traverse the membrane as a helical; Signal-anchor for type II membrane protein segment; the sequence is LMITIFSCLLLWSMLLLLSFS. Residues 26-526 lie on the Lumenal side of the membrane; sequence NIFKHQLLGA…KLVDDTKNEL (501 aa). 3 N-linked (GlcNAc...) asparagine glycosylation sites follow: Asn-211, Asn-215, and Asn-363.

The protein belongs to the glycosyltransferase 37 family. In terms of tissue distribution, expressed in roots, leaves, stems and seedlings.

The protein resides in the golgi apparatus. It localises to the golgi stack membrane. It functions in the pathway protein modification; protein glycosylation. Functionally, may be involved in cell wall biosynthesis. May act as a fucosyltransferase. This Arabidopsis thaliana (Mouse-ear cress) protein is Probable fucosyltransferase 7 (FUT7).